The chain runs to 177 residues: Large ribosomal subunit protein uL6 (177 aa).

It belongs to the universal ribosomal protein uL6 family. As to quaternary structure, part of the 50S ribosomal subunit.

Its function is as follows. This protein binds to the 23S rRNA, and is important in its secondary structure. It is located near the subunit interface in the base of the L7/L12 stalk, and near the tRNA binding site of the peptidyltransferase center. The polypeptide is Large ribosomal subunit protein uL6 (Rhizobium etli (strain CIAT 652)).